The sequence spans 423 residues: Tubulin beta-2 chain (423 aa).

Residues E44, S113, G117, T118, G119, N179, and N201 each contribute to the GTP site. E44 contributes to the Mg(2+) binding site. The segment at 394-423 (VSEYQQYQDATAEEEGEYDEDEDDEGGDYA) is disordered. The segment covering 404–423 (TAEEEGEYDEDEDDEGGDYA) has biased composition (acidic residues).

This sequence belongs to the tubulin family. Dimer of alpha and beta chains. A typical microtubule is a hollow water-filled tube with an outer diameter of 25 nm and an inner diameter of 15 nM. Alpha-beta heterodimers associate head-to-tail to form protofilaments running lengthwise along the microtubule wall with the beta-tubulin subunit facing the microtubule plus end conferring a structural polarity. Microtubules usually have 13 protofilaments but different protofilament numbers can be found in some organisms and specialized cells. It depends on Mg(2+) as a cofactor.

The protein resides in the cytoplasm. It localises to the cytoskeleton. Functionally, tubulin is the major constituent of microtubules, a cylinder consisting of laterally associated linear protofilaments composed of alpha- and beta-tubulin heterodimers. Microtubules grow by the addition of GTP-tubulin dimers to the microtubule end, where a stabilizing cap forms. Below the cap, tubulin dimers are in GDP-bound state, owing to GTPase activity of alpha-tubulin. In Oomycete-like sp. (strain MacKay2000), this protein is Tubulin beta-2 chain (TUBB2).